We begin with the raw amino-acid sequence, 200 residues long: Flavin prenyltransferase UbiX (200 aa).

Residues 15–17 (GAS), T41, 102–105 (SMGT), and R137 contribute to the FMN site. Dimethylallyl phosphate is bound by residues Y167 and K183.

This sequence belongs to the UbiX/PAD1 family.

It carries out the reaction dimethylallyl phosphate + FMNH2 = prenylated FMNH2 + phosphate. Flavin prenyltransferase that catalyzes the synthesis of the prenylated FMN cofactor (prenyl-FMN) for 4-hydroxy-3-polyprenylbenzoic acid decarboxylase UbiD. The prenyltransferase is metal-independent and links a dimethylallyl moiety from dimethylallyl monophosphate (DMAP) to the flavin N5 and C6 atoms of FMN. The polypeptide is Flavin prenyltransferase UbiX (Alkalihalophilus pseudofirmus (strain ATCC BAA-2126 / JCM 17055 / OF4) (Bacillus pseudofirmus)).